The primary structure comprises 187 residues: PRA1 family protein G1 (187 aa).

The next 3 helical transmembrane spans lie at 84–104 (LFLI…AMWL), 125–145 (VIVF…NSLQ), and 146–166 (CLIL…IIRN).

Belongs to the PRA1 family. Expressed in roots and lateral roots.

It localises to the endosome membrane. Functionally, may be involved in both secretory and endocytic intracellular trafficking in the endosomal/prevacuolar compartments. The sequence is that of PRA1 family protein G1 (PRA1G1) from Arabidopsis thaliana (Mouse-ear cress).